A 300-amino-acid chain; its full sequence is tRNA-cytidine(32) 2-sulfurtransferase (300 aa).

Residues Ser57 to Ser62 carry the PP-loop motif motif. [4Fe-4S] cluster-binding residues include Cys132, Cys135, and Cys223.

It belongs to the TtcA family. Homodimer. It depends on Mg(2+) as a cofactor. [4Fe-4S] cluster is required as a cofactor.

The protein localises to the cytoplasm. The catalysed reaction is cytidine(32) in tRNA + S-sulfanyl-L-cysteinyl-[cysteine desulfurase] + AH2 + ATP = 2-thiocytidine(32) in tRNA + L-cysteinyl-[cysteine desulfurase] + A + AMP + diphosphate + H(+). The protein operates within tRNA modification. Functionally, catalyzes the ATP-dependent 2-thiolation of cytidine in position 32 of tRNA, to form 2-thiocytidine (s(2)C32). The sulfur atoms are provided by the cysteine/cysteine desulfurase (IscS) system. This chain is tRNA-cytidine(32) 2-sulfurtransferase, found in Xanthomonas campestris pv. campestris (strain 8004).